An 89-amino-acid polypeptide reads, in one-letter code: Small ribosomal subunit protein uS17 (89 aa).

The protein belongs to the universal ribosomal protein uS17 family. As to quaternary structure, part of the 30S ribosomal subunit.

Its function is as follows. One of the primary rRNA binding proteins, it binds specifically to the 5'-end of 16S ribosomal RNA. The polypeptide is Small ribosomal subunit protein uS17 (Paracidovorax citrulli (strain AAC00-1) (Acidovorax citrulli)).